Here is a 269-residue protein sequence, read N- to C-terminus: Type II iodothyronine deiodinase (269 aa).

Residues 1–9 (MGILSVDLL) are Lumenal-facing. Residues 10-34 (ITLQILPVFFSNCLFLALYDSVILL) traverse the membrane as a helical; Signal-anchor for type III membrane protein segment. At 35–269 (KHVVLLLSRS…KNFSKRUKKT (235 aa)) the chain is on the cytoplasmic side. Residue U133 is part of the active site. Non-standard amino acids (selenocysteine) are located at U133 and U266.

The protein belongs to the iodothyronine deiodinase family. As to quaternary structure, predominantly monomer. Can form homodimers but homodimerization is not essential for enzyme activity. Interacts with USP20 and USP33. Interacts with MARCHF6. In terms of processing, ubiquitinated by MARCHF6, leading to its degradation by the proteasome. Deubiquitinated by USP20 and USP33. As to expression, more expressed in pituitary than in brain, low to undetectable levels in thyroid and skeletal muscle.

The protein resides in the endoplasmic reticulum membrane. The catalysed reaction is 3,3',5-triiodo-L-thyronine + iodide + A + H(+) = L-thyroxine + AH2. It carries out the reaction 3,3'-diiodo-L-thyronine + iodide + A + H(+) = 3,3',5'-triiodo-L-thyronine + AH2. The enzyme catalyses 3'-iodo-L-thyronine + iodide + A + H(+) = 3',5'-diiodo-L-thyronine + AH2. It catalyses the reaction 3,3'-diiodothyronamine + iodide + A + H(+) = 3,3',5'-triiodothyronamine + AH2. The catalysed reaction is 3'-iodothyronamine + iodide + A + H(+) = 3',5'-diiodothyronamine + AH2. Plays a crucial role in the metabolism of thyroid hormones (TH) and has specific roles in TH activation and inactivation by deiodination.Catalyzes the deiodination of L-thyroxine (T4) to 3,5,3'-triiodothyronine (T3) and 3,3',5'-triiodothyronine (rT3) to 3,3'-diiodothyronine (3,3'-T2) via outer-ring deiodination (ORD). Catalyzes the deiodination of 3',5'-diiodothyronine (3',5'-T2) to 3'-monoiodothyronine (3'-T1) via ORD. Catalyzes the phenolic ring deiodinations of 3,3',5'-triiodothyronamine and 3',5'- diiodothyronamine. The sequence is that of Type II iodothyronine deiodinase (DIO2) from Sus scrofa (Pig).